The sequence spans 167 residues: CASP-like protein 3 (167 aa).

Over 1 to 2 (MK) the chain is Cytoplasmic. The chain crosses the membrane as a helical span at residues 3–23 (IIAIAPRIGAAVLSLVAFSVM). Over 24 to 48 (ASTGERRSGAGSTFKVKFSDFQAYN) the chain is Extracellular. Residues 49 to 69 (YLIALNVILFVYSTVQLVMLV) traverse the membrane as a helical segment. Over 70–80 (NSNHNSSFSSP) the chain is Cytoplasmic. The helical transmembrane segment at 81-101 (FKWVLGVYICDQLLAFLLFSA) threads the bilayer. At 102 to 137 (SSSAATASELSRHGLHNIWPPACATWKLWTFCSKAE) the chain is on the extracellular side. Residues 138-158 (AAVAMSFLSSFFIITSSILSG) form a helical membrane-spanning segment. Topologically, residues 159–167 (YHLSKVPAV) are cytoplasmic.

The protein belongs to the Casparian strip membrane proteins (CASP) family. Homodimer and heterodimers.

Its subcellular location is the cell membrane. The polypeptide is CASP-like protein 3 (Osmunda lancea (Fern)).